The following is a 1191-amino-acid chain: Roquin-2 (1191 aa).

Positions 14, 17, 33, 35, 38, 50, and 53 each coordinate Zn(2+). The segment at 14–54 (CPICYNEFDENVHKPISLGCSHTVCKTCLNKLHRKACPFDQ) adopts an RING-type; degenerate zinc-finger fold. Positions 91 to 170 (ENKHYEVAKK…RTVTELILQH (80 aa)) are HEPN-N. The interval 171 to 325 (QNPQQLSANL…SIIDKLQSPE (155 aa)) is ROQ. An HEPN-C region spans residues 326-396 (SFAKSVQELT…GLVDFIQNYS (71 aa)). Residues 410–438 (KYKTSMCRDLRQQGGCPRGTNCTFAHSQE) form a C3H1-type zinc finger. 2 disordered regions span residues 528–576 (GANG…NSVP) and 644–680 (ESSL…PQPY). Polar residues predominate over residues 530 to 546 (NGQNAAGPSADSVTENK). The residue at position 549 (S549) is a Phosphoserine. Over residues 554-576 (PVSNVAATSAGPSNVGTELNSVP) the composition is skewed to polar residues. Residues S808, S983, and S1119 each carry the phosphoserine modification.

Interacts with EDC4. Interacts with CCR4-NOT deadenylase complex. Interacts with MAP3K5; the interaction is probably stimulus-dependent. Post-translationally, proteolytically cleaved after Arg-509 and Arg-585 by MALT1 in activated CD4(+) T cells; cleavage at Arg-509 and Arg-585 is critical for promoting RC3H1 degradation in response to T-cell receptor (TCR) stimulation, and hence is necessary for prolonging the stability of a set of mRNAs controlling Th17 cell differentiation. Expressed in spleen, testis, ovary and small intestine.

Its subcellular location is the cytoplasm. It localises to the P-body. The enzyme catalyses S-ubiquitinyl-[E2 ubiquitin-conjugating enzyme]-L-cysteine + [acceptor protein]-L-lysine = [E2 ubiquitin-conjugating enzyme]-L-cysteine + N(6)-ubiquitinyl-[acceptor protein]-L-lysine.. It functions in the pathway protein modification; protein ubiquitination. With respect to regulation, binding to dsRNA, but not CDE RNA, crosstalks with the E3 ubiquitin ligase activity and may inhibit ubiquitination. Post-transcriptional repressor of mRNAs containing a conserved stem loop motif, called constitutive decay element (CDE), which is often located in the 3'-UTR, as in HMGXB3, ICOS, IER3, NFKBID, NFKBIZ, PPP1R10, TNF and in many more mRNAs. Binds to CDE and promotes mRNA deadenylation and degradation. This process does not involve miRNAs. In follicular helper T (Tfh) cells, represses of ICOS and TNFRSF4 expression, thus preventing spontaneous Tfh cell differentiation, germinal center B-cell differentiation in the absence of immunization and autoimmunity. In resting or LPS-stimulated macrophages, controls inflammation by suppressing TNF expression. Also recognizes CDE in its own mRNA and in that of paralogous RC3H1, possibly leading to feedback loop regulation. miRNA-binding protein that regulates microRNA homeostasis. Enhances DICER-mediated processing of pre-MIR146a but reduces mature MIR146a levels through an increase of 3' end uridylation. Both inhibits ICOS mRNA expression and they may act together to exert the suppression. Acts as a ubiquitin E3 ligase. Pairs with E2 enzymes UBE2B, UBE2D2, UBE2E2, UBE2E3, UBE2G2, UBE2K and UBE2Q2 and produces polyubiquitin chains. Shows the strongest activity when paired with UBE2N:UBE2V1 or UBE2N:UBE2V2 E2 complexes and generate both short and long polyubiquitin chains. Involved in the ubiquitination of MAP3K5. Able to interact with double-stranded RNA (dsRNA). The protein is Roquin-2 (RC3H2) of Homo sapiens (Human).